We begin with the raw amino-acid sequence, 619 residues long: Serine/threonine-protein kinase pkn1 (619 aa).

In terms of domain architecture, Protein kinase spans 15-302; that stretch reads YRILYRKGQS…SSQNLPQAVL (288 aa). Position 21–29 (21–29) interacts with ATP; it reads KGQSLWSED. Catalysis depends on E141, which acts as the Proton acceptor.

This sequence belongs to the protein kinase superfamily. Ser/Thr protein kinase family. Post-translationally, autophosphorylated on serine and threonine residues.

It carries out the reaction L-seryl-[protein] + ATP = O-phospho-L-seryl-[protein] + ADP + H(+). It catalyses the reaction L-threonyl-[protein] + ATP = O-phospho-L-threonyl-[protein] + ADP + H(+). Functionally, together with the serine/threonine kinase PknD, may play a role in the specific interactions with host proteins during intracellular growth. In Chlamydia pneumoniae (Chlamydophila pneumoniae), this protein is Serine/threonine-protein kinase pkn1 (pkn1).